The following is a 259-amino-acid chain: Probable dihydroorotate dehydrogenase B (NAD(+)), electron transfer subunit (259 aa).

An FAD-binding FR-type domain is found at 1 to 89; the sequence is MLPLNVTITQ…RGPFGKGFTL (89 aa). [2Fe-2S] cluster-binding residues include Cys211, Cys216, Cys219, and Cys229.

The protein belongs to the PyrK family. In terms of assembly, heterotetramer of 2 PyrK and 2 PyrD type B subunits. [2Fe-2S] cluster serves as cofactor. Requires FAD as cofactor.

Its pathway is pyrimidine metabolism; UMP biosynthesis via de novo pathway; orotate from (S)-dihydroorotate (NAD(+) route): step 1/1. Its function is as follows. Responsible for channeling the electrons from the oxidation of dihydroorotate from the FMN redox center in the PyrD type B subunit to the ultimate electron acceptor NAD(+). The polypeptide is Probable dihydroorotate dehydrogenase B (NAD(+)), electron transfer subunit (Methanosarcina acetivorans (strain ATCC 35395 / DSM 2834 / JCM 12185 / C2A)).